Consider the following 278-residue polypeptide: Elongation factor Ts (278 aa).

The tract at residues 82-85 is involved in Mg(2+) ion dislocation from EF-Tu; that stretch reads TDFV.

This sequence belongs to the EF-Ts family.

Its subcellular location is the cytoplasm. Its function is as follows. Associates with the EF-Tu.GDP complex and induces the exchange of GDP to GTP. It remains bound to the aminoacyl-tRNA.EF-Tu.GTP complex up to the GTP hydrolysis stage on the ribosome. The chain is Elongation factor Ts (tsf) from Streptomyces coelicolor (strain ATCC BAA-471 / A3(2) / M145).